We begin with the raw amino-acid sequence, 603 residues long: Polypeptide N-acetylgalactosaminyltransferase 10 (603 aa).

The Cytoplasmic segment spans residues 1–11 (MRRKEKRLLQA). The helical; Signal-anchor for type II membrane protein transmembrane segment at 12–31 (VALALAALVLLPNVGLWALY) threads the bilayer. Residues 32–603 (RERQPDGSPG…STVLENFNKN (572 aa)) lie on the Lumenal side of the membrane. Asn124 and Asn146 each carry an N-linked (GlcNAc...) asparagine glycan. Disulfide bonds link Cys135-Cys365, Cys356-Cys432, Cys471-Cys488, Cys523-Cys538, and Cys563-Cys578. The interval 144–253 (LPNTSIIIPF…VNWLPPLLDR (110 aa)) is catalytic subdomain A. Substrate is bound by residues Asp185 and Arg214. Asp237 provides a ligand contact to Mn(2+). Ser238 is a substrate binding site. A Mn(2+)-binding site is contributed by His239. Residues 311–373 (PFESPVMAGG…PCSRVGHIYR (63 aa)) are catalytic subdomain B. Residue Trp342 participates in substrate binding. Residue His370 participates in Mn(2+) binding. Arg373 and Tyr378 together coordinate substrate. A flexible loop region spans residues 373-384 (RKYVPYKVPAGV). One can recognise a Ricin B-type lectin domain in the interval 458–590 (AAWGEIRNVG…SSLTQQWLFE (133 aa)). Residue Asn593 is glycosylated (N-linked (GlcNAc...) asparagine).

Belongs to the glycosyltransferase 2 family. GalNAc-T subfamily. Requires Mn(2+) as cofactor. As to expression, expressed at higher level than GALNT9. In the developing hindbrain region of 14.5 dpc embryos it accumulates in the rapidly dividing, undifferentiated ventricular zone adjacent to the pons. It also accumulates in the regions immediately rostral and caudal to the dorsal rhombic lips differentiating into the cerebellum. Not expressed in the developing choroid plexus.

Its subcellular location is the golgi apparatus membrane. The enzyme catalyses L-seryl-[protein] + UDP-N-acetyl-alpha-D-galactosamine = a 3-O-[N-acetyl-alpha-D-galactosaminyl]-L-seryl-[protein] + UDP + H(+). It catalyses the reaction L-threonyl-[protein] + UDP-N-acetyl-alpha-D-galactosamine = a 3-O-[N-acetyl-alpha-D-galactosaminyl]-L-threonyl-[protein] + UDP + H(+). It participates in protein modification; protein glycosylation. In terms of biological role, catalyzes the initial reaction in O-linked oligosaccharide biosynthesis, the transfer of an N-acetyl-D-galactosamine residue to a serine or threonine residue on the protein receptor. Has activity toward Muc5Ac and EA2 peptide substrates. The polypeptide is Polypeptide N-acetylgalactosaminyltransferase 10 (Galnt10) (Mus musculus (Mouse)).